The primary structure comprises 2271 residues: Protein Ycf2 (2271 aa).

Residue 1628–1635 (GSIGTGRS) participates in ATP binding.

This sequence belongs to the Ycf2 family.

It is found in the plastid. It localises to the chloroplast stroma. Probable ATPase of unknown function. Its presence in a non-photosynthetic plant (Epifagus virginiana) and experiments in tobacco indicate that it has an essential function which is probably not related to photosynthesis. The polypeptide is Protein Ycf2 (Illicium oligandrum (Star anise)).